A 113-amino-acid chain; its full sequence is UPF0102 protein CHU_0465 (113 aa).

Belongs to the UPF0102 family.

The protein is UPF0102 protein CHU_0465 of Cytophaga hutchinsonii (strain ATCC 33406 / DSM 1761 / CIP 103989 / NBRC 15051 / NCIMB 9469 / D465).